Here is a 171-residue protein sequence, read N- to C-terminus: HTH-type transcriptional regulator AldR (171 aa).

Residues 1 to 14 are compositionally biased toward polar residues; that stretch reads MSEGSSITGVQTPG. The tract at residues 1-21 is disordered; it reads MSEGSSITGVQTPGSPKDVRA. Positions 24–85 constitute an HTH asnC-type domain; it reads LDDIDRRILL…DIDPAAVGLG (62 aa). Residues 43–62 constitute a DNA-binding region (H-T-H motif); sequence NSALAEMVGIAPSTCHGRVR.

As to quaternary structure, homodimer in the absence of L-alanine. Homooctamer in the presence of L-alanine. Homotetramers in the presence of L-cysteine.

Its activity is regulated as follows. In the presence of alanine, AldR changes its quaternary structure from a homodimer to an octamer with an open-ring conformation. The binding affinity of AldR for the ald control region is increased significantly by L-alanine. In vitro, L-cysteine also increases the binding affinity of AldR for the target DNA. Functionally, transcriptional regulator that might play a role under hypoxic conditions. Regulates the expression of ald, which encodes L-alanine dehydrogenase. Serves as both an activator for ald expression in the presence of L-alanine and a repressor in the absence of L-alanine. Acts by binding directly to the upstream region of the ald gene. Four AldR-binding sites (O2, O1, O4 and O3) were identified upstream of the ald gene. O2, O1 and O4 are required for the induction of ald expression by alanine, while O3 is directly involved in the repression of ald expression, by occluding the access of RNA polymerase to the ald promoter. In addition to O3, both O1 and O4 are also necessary for full repression of ald expression in the absence of alanine. This is HTH-type transcriptional regulator AldR from Mycolicibacterium smegmatis (strain ATCC 700084 / mc(2)155) (Mycobacterium smegmatis).